The primary structure comprises 236 residues: 2,3,4,5-tetrahydropyridine-2,6-dicarboxylate N-acetyltransferase (236 aa).

Belongs to the transferase hexapeptide repeat family. DapH subfamily.

The enzyme catalyses (S)-2,3,4,5-tetrahydrodipicolinate + acetyl-CoA + H2O = L-2-acetamido-6-oxoheptanedioate + CoA. The protein operates within amino-acid biosynthesis; L-lysine biosynthesis via DAP pathway; LL-2,6-diaminopimelate from (S)-tetrahydrodipicolinate (acetylase route): step 1/3. Functionally, catalyzes the transfer of an acetyl group from acetyl-CoA to tetrahydrodipicolinate. This is 2,3,4,5-tetrahydropyridine-2,6-dicarboxylate N-acetyltransferase from Geobacillus kaustophilus (strain HTA426).